The primary structure comprises 159 residues: Putative 2'-deoxynucleoside 5'-phosphate N-hydrolase 1 (159 aa).

Residues 25–31 (FLSGSIR), tyrosine 40, histidine 58, glutamate 104, and 126–128 (SAM) contribute to the substrate site.

This sequence belongs to the 2'-deoxynucleoside 5'-phosphate N-hydrolase 1 family. In terms of assembly, monomer and homodimer.

The enzyme catalyses a pyrimidine 2'-deoxyribonucleoside 5'-phosphate + H2O = a pyrimidine nucleobase + 2-deoxy-D-ribose 5-phosphate. It catalyses the reaction a purine 2'-deoxyribonucleoside 5'-phosphate + H2O = a purine nucleobase + 2-deoxy-D-ribose 5-phosphate. Catalyzes the cleavage of the N-glycosidic bond of deoxyribonucleoside 5'-monophosphates to yield deoxyribose 5-phosphate and a purine or pyrimidine base. This is Putative 2'-deoxynucleoside 5'-phosphate N-hydrolase 1 from Methanosarcina barkeri (strain Fusaro / DSM 804).